We begin with the raw amino-acid sequence, 708 residues long: Ubiquitin thioesterase Zranb1 (708 aa).

Residues 3–33 (EHGIKWACEYCTYENWPSAIKCTMCRAQRPS) form a RanBP2-type 1 zinc finger. Residues cysteine 10, cysteine 13, cysteine 24, and cysteine 27 each coordinate Zn(2+). Residues 38-73 (TEDPFKSGSSDVGRDWDPSSTEGGSSPLICPDSSAR) form a disordered region. 2 consecutive RanBP2-type zinc fingers follow at residues 84 to 113 (NANK…QRRT) and 149 to 178 (RTQH…PRPN). Positions 90, 93, 104, 107, 155, 158, 169, and 172 each coordinate Zn(2+). The segment at 202–224 (RWRGGCSSGNSQRRSPPTTKRDS) is disordered. Over residues 209–219 (SGNSQRRSPPT) the composition is skewed to polar residues. ANK repeat units follow at residues 260 to 290 (KKTD…SGGD) and 313 to 340 (YTLV…QQAA). The OTU domain maps to 432 to 592 (LYALWNRTAG…RGHFSALVAM (161 aa)). Cysteine 443 serves as the catalytic Nucleophile. The active-site Proton acceptor is the histidine 585.

Belongs to the peptidase C64 family. As to quaternary structure, interacts with TRAF6. Interacts with APC.

Its subcellular location is the cytoplasm. The protein resides in the nucleus. It carries out the reaction Thiol-dependent hydrolysis of ester, thioester, amide, peptide and isopeptide bonds formed by the C-terminal Gly of ubiquitin (a 76-residue protein attached to proteins as an intracellular targeting signal).. Its function is as follows. Ubiquitin thioesterase, which specifically hydrolyzes 'Lys-29'-linked and 'Lys-33'-linked diubiquitin. Also cleaves 'Lys-63'-linked chains, but with 40-fold less efficiency compared to 'Lys-29'-linked ones. Positive regulator of the Wnt signaling pathway that deubiquitinates APC protein, a negative regulator of Wnt-mediated transcription. Acts as a regulator of autophagy by mediating deubiquitination of PIK3C3/VPS34, thereby promoting autophagosome maturation. Plays a role in the regulation of cell morphology and cytoskeletal organization. Required in the stress fiber dynamics and cell migration. This chain is Ubiquitin thioesterase Zranb1, found in Mus musculus (Mouse).